Here is a 24-residue protein sequence, read N- to C-terminus: Osteocalcin (24 aa).

In terms of domain architecture, Gla spans 1 to 24 (REVCELNPDCDELADHIGFQEAYR). E2, E5, and D11 together coordinate Ca(2+). 4-carboxyglutamate is present on residues E2 and E5. Cysteines 4 and 10 form a disulfide.

This sequence belongs to the osteocalcin/matrix Gla protein family. In terms of processing, gamma-carboxyglutamate residues are formed by vitamin K dependent carboxylation by GGCX. These residues are essential for the binding of calcium. Decarboxylation promotes the hormone activity.

It localises to the secreted. The carboxylated form is one of the main organic components of the bone matrix, which constitutes 1-2% of the total bone protein: it acts as a negative regulator of bone formation and is required to limit bone formation without impairing bone resorption or mineralization. The carboxylated form binds strongly to apatite and calcium. Its function is as follows. The uncarboxylated form acts as a hormone secreted by osteoblasts, which regulates different cellular processes, such as energy metabolism, male fertility and brain development. Regulates of energy metabolism by acting as a hormone favoring pancreatic beta-cell proliferation, insulin secretion and sensitivity and energy expenditure. Uncarboxylated osteocalcin hormone also promotes testosterone production in the testes: acts as a ligand for G protein-coupled receptor GPRC6A at the surface of Leydig cells, initiating a signaling response that promotes the expression of enzymes required for testosterone synthesis in a CREB-dependent manner. Also acts as a regulator of brain development: osteocalcin hormone crosses the blood-brain barrier and acts as a ligand for GPR158 on neurons, initiating a signaling response that prevents neuronal apoptosis in the hippocampus, favors the synthesis of all monoamine neurotransmitters and inhibits that of gamma-aminobutyric acid (GABA). Osteocalcin also crosses the placenta during pregnancy and maternal osteocalcin is required for fetal brain development. This is Osteocalcin from Homo sapiens neanderthalensis (Neanderthal).